The sequence spans 295 residues: GTPase Era (295 aa).

The Era-type G domain occupies 7-176; that stretch reads KTVSVCIIGR…ITSKAKIAPW (170 aa). The tract at residues 15–22 is G1; it reads GRPNSGKS. 15–22 provides a ligand contact to GTP; the sequence is GRPNSGKS. The interval 41 to 45 is G2; the sequence is QTTRS. Positions 62-65 are G3; the sequence is DTPG. Residues 62 to 66 and 124 to 127 each bind GTP; these read DTPGI and NKID. The G4 stretch occupies residues 124–127; the sequence is NKID. Residues 152–154 form a G5 region; that stretch reads ISA. Residues 204 to 281 enclose the KH type-2 domain; the sequence is LQQELPYKLT…HLFLFVKVRE (78 aa).

It belongs to the TRAFAC class TrmE-Era-EngA-EngB-Septin-like GTPase superfamily. Era GTPase family. As to quaternary structure, monomer.

It is found in the cytoplasm. It localises to the cell inner membrane. Functionally, an essential GTPase that binds both GDP and GTP, with rapid nucleotide exchange. Plays a role in 16S rRNA processing and 30S ribosomal subunit biogenesis and possibly also in cell cycle regulation and energy metabolism. The protein is GTPase Era of Rickettsia bellii (strain OSU 85-389).